The sequence spans 301 residues: Mitochondrial carnitine/acylcarnitine carrier protein (301 aa).

An N-acetylalanine modification is found at alanine 2. Over 2-12 (ADQPKPISPLK) the chain is Cytoplasmic. Solcar repeat units follow at residues 8 to 99 (ISPL…GKKL), 108 to 196 (LSYP…LKNI), and 207 to 293 (LSAP…AMKF). Residues 13–31 (NLLAGGFGGVCLVFVGHPL) traverse the membrane as a helical segment. Over 32-73 (DTVKVRLQTQPPSLPGQPPMYSGTFDCFRKTLFREGITGLYR) the chain is Mitochondrial matrix. A helical transmembrane segment spans residues 74–93 (GMAAPIIGVTPMFAVCFFGF). Topologically, residues 94–112 (GLGKKLQQKHPEDVLSYPQ) are cytoplasmic. A helical membrane pass occupies residues 113–131 (LFAAGMLSGVFTTGIMTPG). At 132 to 170 (ERIKCLLQIQASSGESKYTGTLDCAKKLYQEFGIRGIYK) the chain is on the mitochondrial matrix side. Lysine 148 and lysine 157 each carry N6-acetyllysine. The residue at position 170 (lysine 170) is an N6-acetyllysine; alternate. Position 170 is an N6-succinyllysine; alternate (lysine 170). A helical transmembrane segment spans residues 171 to 190 (GTVLTLMRDVPASGMYFMTY). At 191 to 211 (EWLKNIFTPEGKRVSELSAPR) the chain is on the cytoplasmic side. Residues 212 to 230 (ILVAGGIAGIFNWAVAIPP) form a helical membrane-spanning segment. Over 231–267 (DVLKSRFQTAPPGKYPNGFRDVLRELIRDEGVTSLYK) the chain is Mitochondrial matrix. A helical transmembrane segment spans residues 268–287 (GFNAVMIRAFPANAACFLGF). The Cytoplasmic portion of the chain corresponds to 288 to 301 (EVAMKFLNWATPNL).

Belongs to the mitochondrial carrier (TC 2.A.29) family.

The protein resides in the mitochondrion inner membrane. The catalysed reaction is O-acetyl-(R)-carnitine(in) + (R)-carnitine(out) = O-acetyl-(R)-carnitine(out) + (R)-carnitine(in). The enzyme catalyses an O-acyl-(R)-carnitine(in) + (R)-carnitine(out) = an O-acyl-(R)-carnitine(out) + (R)-carnitine(in). It carries out the reaction O-propanoyl-(R)-carnitine(in) + (R)-carnitine(out) = O-propanoyl-(R)-carnitine(out) + (R)-carnitine(in). It catalyses the reaction O-hexadecanoyl-(R)-carnitine(in) + (R)-carnitine(out) = O-hexadecanoyl-(R)-carnitine(out) + (R)-carnitine(in). The catalysed reaction is O-octanoyl-(R)-carnitine(in) + (R)-carnitine(out) = O-octanoyl-(R)-carnitine(out) + (R)-carnitine(in). The enzyme catalyses (R)-carnitine(in) = (R)-carnitine(out). Functionally, mediates the electroneutral exchange of acylcarnitines (O-acyl-(R)-carnitine or L-acylcarnitine) of different acyl chain lengths (ranging from O-acetyl-(R)-carnitine to long-chain O-acyl-(R)-carnitines) with free carnitine ((R)-carnitine or L-carnitine) across the mitochondrial inner membrane, via a ping-pong mechanism. Key player in the mitochondrial oxidation pathway, it translocates the fatty acids in the form of acylcarnitines into the mitochondrial matrix, where the carnitine palmitoyltransferase 2 (CPT-2) activates them to undergo fatty acid beta-oxidation. Catalyzes the unidirectional transport (uniport) of carnitine at lower rates than the antiport (exchange). This Homo sapiens (Human) protein is Mitochondrial carnitine/acylcarnitine carrier protein.